The following is a 35-amino-acid chain: Photosystem II reaction center protein T (35 aa).

A helical membrane pass occupies residues 3–23; the sequence is ALVYTFLLVSTLGILFFAIFF.

The protein belongs to the PsbT family. PSII is composed of 1 copy each of membrane proteins PsbA, PsbB, PsbC, PsbD, PsbE, PsbF, PsbH, PsbI, PsbJ, PsbK, PsbL, PsbM, PsbT, PsbY, PsbZ, Psb30/Ycf12, at least 3 peripheral proteins of the oxygen-evolving complex and a large number of cofactors. It forms dimeric complexes.

It is found in the plastid. The protein resides in the chloroplast thylakoid membrane. Its function is as follows. Found at the monomer-monomer interface of the photosystem II (PS II) dimer, plays a role in assembly and dimerization of PSII. PSII is a light-driven water plastoquinone oxidoreductase, using light energy to abstract electrons from H(2)O, generating a proton gradient subsequently used for ATP formation. This Gnetum gnemon (Spanish joint-fir) protein is Photosystem II reaction center protein T.